Reading from the N-terminus, the 549-residue chain is Glucose-6-phosphate isomerase (549 aa).

Residue Glu353 is the Proton donor of the active site. Active-site residues include His384 and Lys513.

This sequence belongs to the GPI family.

It localises to the cytoplasm. It catalyses the reaction alpha-D-glucose 6-phosphate = beta-D-fructose 6-phosphate. Its pathway is carbohydrate biosynthesis; gluconeogenesis. It functions in the pathway carbohydrate degradation; glycolysis; D-glyceraldehyde 3-phosphate and glycerone phosphate from D-glucose: step 2/4. Catalyzes the reversible isomerization of glucose-6-phosphate to fructose-6-phosphate. The protein is Glucose-6-phosphate isomerase of Brucella anthropi (strain ATCC 49188 / DSM 6882 / CCUG 24695 / JCM 21032 / LMG 3331 / NBRC 15819 / NCTC 12168 / Alc 37) (Ochrobactrum anthropi).